The sequence spans 81 residues: Small ribosomal subunit protein bS16c (81 aa).

The protein belongs to the bacterial ribosomal protein bS16 family.

It localises to the plastid. The protein localises to the chloroplast. The chain is Small ribosomal subunit protein bS16c from Emiliania huxleyi (Coccolithophore).